The following is a 254-amino-acid chain: Metallo-beta-lactamase type 2 (254 aa).

The signal sequence occupies residues 1–27; the sequence is MMKGWMKCGLAGAVVLMASFWGGSVRA. Zn(2+) is bound at residue aspartate 99. Positions 135 and 174 each coordinate substrate. Cysteine 193 is a binding site for Zn(2+). Positions 196 and 201 each coordinate substrate. Histidine 231 contacts Zn(2+).

This sequence belongs to the metallo-beta-lactamase superfamily. Class-B beta-lactamase family. As to quaternary structure, monomer. Zn(2+) is required as a cofactor.

The protein resides in the periplasm. It carries out the reaction a beta-lactam + H2O = a substituted beta-amino acid. Its activity is regulated as follows. Competitively inhibited by mercaptophosphonate and pyridine carboxylate derivatives. Also inhibited by the binding of a second zinc ion and by chelating agents such as EDTA. Its function is as follows. Confers resistance to the different beta-lactams antibiotics (penicillin, cephalosporin and carbapenem) via the hydrolysis of the beta-lactam ring. It is able to hydrolyze penicillin and imipenem, but is much less active against cephalothin, cefotaxime, meropenem and ceftazidime. The protein is Metallo-beta-lactamase type 2 of Aeromonas hydrophila.